Here is a 907-residue protein sequence, read N- to C-terminus: Interference hedgehog (907 aa).

A signal peptide spans M1–A23. Topologically, residues A24 to P709 are extracellular. Ig-like C2-type domains are found at residues P42–S149, G152–A233, P252–L340, and P346–N433. Disulfide bonds link C65–C127, C173–C221, and C276–C324. N-linked (GlcNAc...) asparagine glycans are attached at residues N101, N203, N300, and N355. C367 and C415 form a disulfide bridge. The disordered stretch occupies residues G427–V474. The segment covering Q462–V474 has biased composition (polar residues). Fibronectin type-III domains lie at P468 to G578 and V586 to P681. N473 is a glycosylation site (N-linked (GlcNAc...) asparagine). 3 residues coordinate heparin: R504, K511, and K513. Residues N537 and N548 are each glycosylated (N-linked (GlcNAc...) asparagine). R552 is a heparin binding site. A glycan (N-linked (GlcNAc...) asparagine) is linked at N568. Polar residues predominate over residues G676–Q688. The interval G676–H701 is disordered. N702 carries an N-linked (GlcNAc...) asparagine glycan. The helical transmembrane segment at M710–L730 threads the bilayer. Residues C731–V907 are Cytoplasmic-facing. 2 disordered regions span residues A780–D805 and M829–G881. 2 stretches are compositionally biased toward low complexity: residues Q781–Q794 and N853–G863. Residues L865–N878 show a composition bias toward polar residues.

This sequence belongs to the immunoglobulin superfamily. IHOG family. As to quaternary structure, homodimer. Heterotetramer; 2 iHog chains bind 2 hh chains when facilitated by heparin, heparin is required to promote high-affinity interactions between hh and iHog.

Its subcellular location is the membrane. Its function is as follows. Mediates response to the active Hedgehog (Hh) protein signal in embryos, functioning upstream or at the level of patched (ptc). This Drosophila virilis (Fruit fly) protein is Interference hedgehog.